The chain runs to 500 residues: Probable cytosol aminopeptidase (500 aa).

Mn(2+) contacts are provided by lysine 264 and aspartate 269. Residue lysine 276 is part of the active site. Residues aspartate 287, aspartate 346, and glutamate 348 each coordinate Mn(2+). Arginine 350 is a catalytic residue.

The protein belongs to the peptidase M17 family. Mn(2+) is required as a cofactor.

The protein resides in the cytoplasm. The catalysed reaction is Release of an N-terminal amino acid, Xaa-|-Yaa-, in which Xaa is preferably Leu, but may be other amino acids including Pro although not Arg or Lys, and Yaa may be Pro. Amino acid amides and methyl esters are also readily hydrolyzed, but rates on arylamides are exceedingly low.. It carries out the reaction Release of an N-terminal amino acid, preferentially leucine, but not glutamic or aspartic acids.. Functionally, presumably involved in the processing and regular turnover of intracellular proteins. Catalyzes the removal of unsubstituted N-terminal amino acids from various peptides. The polypeptide is Probable cytosol aminopeptidase (Rickettsia canadensis (strain McKiel)).